A 149-amino-acid polypeptide reads, in one-letter code: Probable ubiquitin-conjugating enzyme E2 12 (149 aa).

Residues 1 to 15 (MASKRISRELRDMQR) are compositionally biased toward basic and acidic residues. The tract at residues 1–22 (MASKRISRELRDMQRHPPANCS) is disordered. One can recognise a UBC core domain in the interval 1-148 (MASKRISREL…AQKWTQKYAM (148 aa)). Residue C86 is the Glycyl thioester intermediate of the active site.

Belongs to the ubiquitin-conjugating enzyme family. As to expression, ubiquitously expressed at very low levels.

It carries out the reaction S-ubiquitinyl-[E1 ubiquitin-activating enzyme]-L-cysteine + [E2 ubiquitin-conjugating enzyme]-L-cysteine = [E1 ubiquitin-activating enzyme]-L-cysteine + S-ubiquitinyl-[E2 ubiquitin-conjugating enzyme]-L-cysteine.. The protein operates within protein modification; protein ubiquitination. Functionally, accepts the ubiquitin from the E1 complex and catalyzes its covalent attachment to other proteins. The sequence is that of Probable ubiquitin-conjugating enzyme E2 12 (UBC12) from Arabidopsis thaliana (Mouse-ear cress).